Reading from the N-terminus, the 374-residue chain is MGDEAEIKEHLKPQASSETIDKKHNVKGKRLWQKVKYQLVEFHSLPAYLRDNEYIIGHYRSEWPIKQILLSIFTIHNETLNVWTHLIGFFLFLALTIYTATKVPSVVDLHSLQHRLPDLLRKTDLHKLHSELMSRLPSSPSSWHVMDLLYNCLPERFSHGNYTDMCVLHSVREDLANLIAPLIFRPITRWPFYAFLGGAIFCLLASSTCHLLSCHSERVSYIMLRLDYAGIAALIATSFYPPVYYSFMCDPFFCNLYLGFITILGIATVLVSLLPVFQSLEFRVVRASLFFGMGFSGLAPILHKLIIFWDQPEALHMTGYEILMGLLYGLGAVVYATRIPERWMPGKFDIAGHSHQLFHVLVVAGALTHYRAGL.

The Cytoplasmic segment spans residues 1–79; it reads MGDEAEIKEH…LSIFTIHNET (79 aa). Residues 80–100 form a helical membrane-spanning segment; it reads LNVWTHLIGFFLFLALTIYTA. The Extracellular portion of the chain corresponds to 101 to 191; the sequence is TKVPSVVDLH…LIFRPITRWP (91 aa). The chain crosses the membrane as a helical span at residues 192–212; it reads FYAFLGGAIFCLLASSTCHLL. The Cytoplasmic portion of the chain corresponds to 213-228; the sequence is SCHSERVSYIMLRLDY. Residues 229–249 form a helical membrane-spanning segment; it reads AGIAALIATSFYPPVYYSFMC. Over 250–256 the chain is Extracellular; it reads DPFFCNL. Residues 257–277 traverse the membrane as a helical segment; sequence YLGFITILGIATVLVSLLPVF. At 278 to 288 the chain is on the cytoplasmic side; it reads QSLEFRVVRAS. The helical transmembrane segment at 289 to 309 threads the bilayer; sequence LFFGMGFSGLAPILHKLIIFW. Over 310–313 the chain is Extracellular; that stretch reads DQPE. The chain crosses the membrane as a helical span at residues 314-334; it reads ALHMTGYEILMGLLYGLGAVV. At 335–347 the chain is on the cytoplasmic side; sequence YATRIPERWMPGK. The helical transmembrane segment at 348–368 threads the bilayer; sequence FDIAGHSHQLFHVLVVAGALT. Over 369–374 the chain is Extracellular; the sequence is HYRAGL.

Belongs to the ADIPOR family. In terms of tissue distribution, expressed in roots, leaves, stems and flowers.

The protein resides in the membrane. May play a role in abiotic stress response. The chain is Heptahelical transmembrane protein 5 (HHP5) from Arabidopsis thaliana (Mouse-ear cress).